A 346-amino-acid polypeptide reads, in one-letter code: Biotin synthase (346 aa).

In terms of domain architecture, Radical SAM core spans 38–256 (RQVQVSTLLS…IAVARIMMPT (219 aa)). Residues Cys-53, Cys-57, and Cys-60 each coordinate [4Fe-4S] cluster. Residues Cys-97, Cys-128, Cys-188, and Arg-260 each contribute to the [2Fe-2S] cluster site.

Belongs to the radical SAM superfamily. Biotin synthase family. In terms of assembly, homodimer. [4Fe-4S] cluster is required as a cofactor. Requires [2Fe-2S] cluster as cofactor.

It carries out the reaction (4R,5S)-dethiobiotin + (sulfur carrier)-SH + 2 reduced [2Fe-2S]-[ferredoxin] + 2 S-adenosyl-L-methionine = (sulfur carrier)-H + biotin + 2 5'-deoxyadenosine + 2 L-methionine + 2 oxidized [2Fe-2S]-[ferredoxin]. It functions in the pathway cofactor biosynthesis; biotin biosynthesis; biotin from 7,8-diaminononanoate: step 2/2. Catalyzes the conversion of dethiobiotin (DTB) to biotin by the insertion of a sulfur atom into dethiobiotin via a radical-based mechanism. The polypeptide is Biotin synthase (Shigella boydii serotype 18 (strain CDC 3083-94 / BS512)).